The sequence spans 198 residues: Recombination protein RecR (198 aa).

Residues 57–72 (CSVCGHITENDPCYIC) form a C4-type zinc finger. Positions 80 to 175 (SVICVVEDDK…KVTRLAQGLS (96 aa)) constitute a Toprim domain.

Belongs to the RecR family.

Functionally, may play a role in DNA repair. It seems to be involved in an RecBC-independent recombinational process of DNA repair. It may act with RecF and RecO. In Staphylococcus aureus (strain JH1), this protein is Recombination protein RecR.